Here is a 300-residue protein sequence, read N- to C-terminus: N-acetylmuramic acid 6-phosphate etherase (300 aa).

Residues 57–220 (VAAALRAGGR…STGAMIRIGK (164 aa)) form the SIS domain. Glu-85 serves as the catalytic Proton donor. Residue Glu-116 is part of the active site.

This sequence belongs to the GCKR-like family. MurNAc-6-P etherase subfamily. In terms of assembly, homodimer.

It carries out the reaction N-acetyl-D-muramate 6-phosphate + H2O = N-acetyl-D-glucosamine 6-phosphate + (R)-lactate. The protein operates within amino-sugar metabolism; 1,6-anhydro-N-acetylmuramate degradation. It functions in the pathway amino-sugar metabolism; N-acetylmuramate degradation. It participates in cell wall biogenesis; peptidoglycan recycling. Its function is as follows. Specifically catalyzes the cleavage of the D-lactyl ether substituent of MurNAc 6-phosphate, producing GlcNAc 6-phosphate and D-lactate. Together with AnmK, is also required for the utilization of anhydro-N-acetylmuramic acid (anhMurNAc) either imported from the medium or derived from its own cell wall murein, and thus plays a role in cell wall recycling. The chain is N-acetylmuramic acid 6-phosphate etherase from Klebsiella aerogenes (Enterobacter aerogenes).